The sequence spans 325 residues: Beta-ketoacyl-[acyl-carrier-protein] synthase III (325 aa).

Residues Cys112 and His250 contribute to the active site. The interval 251 to 255 is ACP-binding; it reads QANSR. Asn280 is an active-site residue.

The protein belongs to the thiolase-like superfamily. FabH family. In terms of assembly, homodimer.

It localises to the cytoplasm. The catalysed reaction is malonyl-[ACP] + acetyl-CoA + H(+) = 3-oxobutanoyl-[ACP] + CO2 + CoA. The protein operates within lipid metabolism; fatty acid biosynthesis. Catalyzes the condensation reaction of fatty acid synthesis by the addition to an acyl acceptor of two carbons from malonyl-ACP. Catalyzes the first condensation reaction which initiates fatty acid synthesis and may therefore play a role in governing the total rate of fatty acid production. Possesses both acetoacetyl-ACP synthase and acetyl transacylase activities. Its substrate specificity determines the biosynthesis of branched-chain and/or straight-chain of fatty acids. This Lactococcus lactis subsp. cremoris (strain MG1363) protein is Beta-ketoacyl-[acyl-carrier-protein] synthase III.